The chain runs to 153 residues: Pheromone-binding protein Gp-9 (153 aa).

The N-terminal stretch at 1–19 (MKTFVLHIFIFALVAFASA) is a signal peptide. 3 disulfides stabilise this stretch: cysteine 37–cysteine 77, cysteine 73–cysteine 129, and cysteine 118–cysteine 138.

This sequence belongs to the PBP/GOBP family. Homodimer.

The protein resides in the secreted. Its function is as follows. Colony queen number, a major feature of social organization, is associated with worker genotype for Gp-9. Colonies are headed by either a single reproductive queen (monogyne form) or multiple queens (polygyne form). Differences in worker Gp-9 genotypes between social forms may cause differences in workers' abilities to recognize queens and regulate their numbers. The protein is Pheromone-binding protein Gp-9 of Solenopsis n. sp. (strain JP-2002) (Fire ant).